Here is a 209-residue protein sequence, read N- to C-terminus: Chaperone protein TorD (209 aa).

It belongs to the TorD/DmsD family. TorD subfamily.

The protein localises to the cytoplasm. Its function is as follows. Involved in the biogenesis of TorA. Acts on TorA before the insertion of the molybdenum cofactor and, as a result, probably favors a conformation of the apoenzyme that is competent for acquiring the cofactor. This Shewanella sp. (strain ANA-3) protein is Chaperone protein TorD.